A 425-amino-acid chain; its full sequence is Serine--tRNA ligase (425 aa).

Residues Asn110–Pro134 are disordered. The span at Pro117 to Pro134 shows a compositional bias: basic and acidic residues. L-serine is bound at residue Thr233–Glu235. Arg264–Glu266 serves as a coordination point for ATP. Residue Glu287 participates in L-serine binding. Residue Glu351 to Ser354 coordinates ATP. Residue Ser385 coordinates L-serine.

This sequence belongs to the class-II aminoacyl-tRNA synthetase family. Type-1 seryl-tRNA synthetase subfamily. In terms of assembly, homodimer. The tRNA molecule binds across the dimer.

It is found in the cytoplasm. The enzyme catalyses tRNA(Ser) + L-serine + ATP = L-seryl-tRNA(Ser) + AMP + diphosphate + H(+). The catalysed reaction is tRNA(Sec) + L-serine + ATP = L-seryl-tRNA(Sec) + AMP + diphosphate + H(+). It functions in the pathway aminoacyl-tRNA biosynthesis; selenocysteinyl-tRNA(Sec) biosynthesis; L-seryl-tRNA(Sec) from L-serine and tRNA(Sec): step 1/1. Its function is as follows. Catalyzes the attachment of serine to tRNA(Ser). Is also able to aminoacylate tRNA(Sec) with serine, to form the misacylated tRNA L-seryl-tRNA(Sec), which will be further converted into selenocysteinyl-tRNA(Sec). In Synechococcus sp. (strain RCC307), this protein is Serine--tRNA ligase.